A 298-amino-acid polypeptide reads, in one-letter code: Inosose dehydratase (298 aa).

This sequence belongs to the IolE/MocC family. It depends on glutathione as a cofactor. Co(2+) serves as cofactor. Requires Mn(2+) as cofactor.

The enzyme catalyses scyllo-inosose = 3D-3,5/4-trihydroxycyclohexane-1,2-dione + H2O. Catalyzes the dehydration of inosose (2-keto-myo-inositol, 2KMI or 2,4,6/3,5-pentahydroxycyclohexanone) to 3D-(3,5/4)-trihydroxycyclohexane-1,2-dione (D-2,3-diketo-4-deoxy-epi-inositol). In Glaesserella parasuis serovar 5 (strain SH0165) (Haemophilus parasuis), this protein is Inosose dehydratase.